A 455-amino-acid chain; its full sequence is GTPase Der (455 aa).

2 EngA-type G domains span residues 4 to 169 (PIVA…PKDQ) and 178 to 355 (LRVS…GQHQ). Residues 10-17 (GRPNVGKS), 57-61 (DTGGL), 120-123 (NKLE), 184-191 (GRPNVGKS), 233-237 (DTAGI), and 298-301 (NKWD) each bind GTP. The region spanning 356 to 441 (RRVSTSVLNE…PVRFIFRGKP (86 aa)) is the KH-like domain.

It belongs to the TRAFAC class TrmE-Era-EngA-EngB-Septin-like GTPase superfamily. EngA (Der) GTPase family. In terms of assembly, associates with the 50S ribosomal subunit.

GTPase that plays an essential role in the late steps of ribosome biogenesis. The chain is GTPase Der from Gloeobacter violaceus (strain ATCC 29082 / PCC 7421).